A 217-amino-acid polypeptide reads, in one-letter code: N-(5'-phosphoribosyl)anthranilate isomerase (217 aa).

Belongs to the TrpF family.

The enzyme catalyses N-(5-phospho-beta-D-ribosyl)anthranilate = 1-(2-carboxyphenylamino)-1-deoxy-D-ribulose 5-phosphate. The protein operates within amino-acid biosynthesis; L-tryptophan biosynthesis; L-tryptophan from chorismate: step 3/5. This is N-(5'-phosphoribosyl)anthranilate isomerase from Chlorobium chlorochromatii (strain CaD3).